The sequence spans 28 residues: Nicotinic acetylcholine receptor-binding protein Mnn-3C (28 aa).

Cysteine 3 and cysteine 24 are disulfide-bonded.

It belongs to the three-finger toxin family. Short-chain subfamily. In terms of tissue distribution, expressed by the venom gland.

It localises to the secreted. Binds and may inhibit nicotinic acetylcholine receptors (nAChR). In Micrurus nigrocinctus (Central American coral snake), this protein is Nicotinic acetylcholine receptor-binding protein Mnn-3C.